A 329-amino-acid chain; its full sequence is GTP 3',8-cyclase (329 aa).

One can recognise a Radical SAM core domain in the interval 8–234 (AFARKFYYLR…QLRQRSDGPA (227 aa)). Position 17 (arginine 17) interacts with GTP. Positions 24 and 28 each coordinate [4Fe-4S] cluster. Residue tyrosine 30 participates in S-adenosyl-L-methionine binding. Cysteine 31 contacts [4Fe-4S] cluster. GTP is bound at residue arginine 68. Glycine 72 is an S-adenosyl-L-methionine binding site. Threonine 99 contacts GTP. Serine 123 lines the S-adenosyl-L-methionine pocket. Position 160 (lysine 160) interacts with GTP. Position 194 (methionine 194) interacts with S-adenosyl-L-methionine. [4Fe-4S] cluster is bound by residues cysteine 257 and cysteine 260. 262–264 (RLR) lines the GTP pocket. Cysteine 274 is a [4Fe-4S] cluster binding site.

It belongs to the radical SAM superfamily. MoaA family. Monomer and homodimer. It depends on [4Fe-4S] cluster as a cofactor.

The enzyme catalyses GTP + AH2 + S-adenosyl-L-methionine = (8S)-3',8-cyclo-7,8-dihydroguanosine 5'-triphosphate + 5'-deoxyadenosine + L-methionine + A + H(+). It participates in cofactor biosynthesis; molybdopterin biosynthesis. Its function is as follows. Catalyzes the cyclization of GTP to (8S)-3',8-cyclo-7,8-dihydroguanosine 5'-triphosphate. The protein is GTP 3',8-cyclase of Escherichia coli O139:H28 (strain E24377A / ETEC).